The sequence spans 173 residues: Large ribosomal subunit protein uL10 (173 aa).

This sequence belongs to the universal ribosomal protein uL10 family. In terms of assembly, part of the ribosomal stalk of the 50S ribosomal subunit. The N-terminus interacts with L11 and the large rRNA to form the base of the stalk. The C-terminus forms an elongated spine to which L12 dimers bind in a sequential fashion forming a multimeric L10(L12)X complex.

Forms part of the ribosomal stalk, playing a central role in the interaction of the ribosome with GTP-bound translation factors. This chain is Large ribosomal subunit protein uL10, found in Micrococcus luteus (strain ATCC 4698 / DSM 20030 / JCM 1464 / CCM 169 / CCUG 5858 / IAM 1056 / NBRC 3333 / NCIMB 9278 / NCTC 2665 / VKM Ac-2230) (Micrococcus lysodeikticus).